The sequence spans 629 residues: tRNA uridine 5-carboxymethylaminomethyl modification enzyme MnmG (629 aa).

Residues 13–18 (GGGHAG), Val-125, and Ser-180 contribute to the FAD site. 273–287 (GPRYCPSIEDKVMRF) is a binding site for NAD(+). Residue Gln-370 coordinates FAD.

It belongs to the MnmG family. Homodimer. Heterotetramer of two MnmE and two MnmG subunits. FAD is required as a cofactor.

The protein resides in the cytoplasm. Functionally, NAD-binding protein involved in the addition of a carboxymethylaminomethyl (cmnm) group at the wobble position (U34) of certain tRNAs, forming tRNA-cmnm(5)s(2)U34. This Pasteurella multocida (strain Pm70) protein is tRNA uridine 5-carboxymethylaminomethyl modification enzyme MnmG.